Consider the following 457-residue polypeptide: Metal tolerance protein C4 (457 aa).

Residues 1-115 (MQSSHRILSR…IEINDQHSQR (115 aa)) lie on the Cytoplasmic side of the membrane. The chain crosses the membrane as a helical span at residues 116-136 (AVTTALWCNFLVFSLKFGVWW). Residues 137–141 (TSSSH) lie on the Vacuolar side of the membrane. The chain crosses the membrane as a helical span at residues 142–162 (VIMAEVVHSVADFANQALLAY). Topologically, residues 163–183 (GLSSSRRAPDALHPYGYSKER) are cytoplasmic. The helical transmembrane segment at 184–204 (FVWSLISAVGIFCLGSGATIV) threads the bilayer. Residues 205–220 (NGVQNLWTSSPPPNME) lie on the Vacuolar side of the membrane. The helical transmembrane segment at 221–241 (LAAVVIGGSFLIEGASLLVAI) threads the bilayer. The Cytoplasmic portion of the chain corresponds to 242–267 (QSVKKGAAQEGMTIRDYIWRGHDPTS). Residues 268 to 288 (VAVMTEDGAAVAGLAIAAASL) traverse the membrane as a helical segment. Over 289–297 (VAVRMTGNP) the chain is Vacuolar. A helical membrane pass occupies residues 298–318 (IYDPIGSIVVGNLLGMVAIFL). The Cytoplasmic segment spans residues 319–457 (IQRNRHALIG…HNPTPTDPSL (139 aa)).

This sequence belongs to the cation diffusion facilitator (CDF) transporter (TC 2.A.4) family.

It is found in the vacuole membrane. Functionally, involved in sequestration of excess metal in the cytoplasm into vacuoles to maintain metal homeostasis. The protein is Metal tolerance protein C4 (MTPC4) of Arabidopsis thaliana (Mouse-ear cress).